Reading from the N-terminus, the 509-residue chain is Probable cytochrome P450 519B1 (509 aa).

A helical membrane pass occupies residues 1 to 21 (MNLINLILYFILFWIVFDFIR). Cysteine 456 lines the heme pocket.

The protein belongs to the cytochrome P450 family. The cofactor is heme.

The protein localises to the membrane. The protein is Probable cytochrome P450 519B1 (cyp519B1) of Dictyostelium discoideum (Social amoeba).